We begin with the raw amino-acid sequence, 423 residues long: UDP-N-acetylglucosamine 1-carboxyvinyltransferase 2 (423 aa).

23-24 (KN) is a binding site for phosphoenolpyruvate. A UDP-N-acetyl-alpha-D-glucosamine-binding site is contributed by Arg-93. Cys-117 functions as the Proton donor in the catalytic mechanism. Cys-117 is subject to 2-(S-cysteinyl)pyruvic acid O-phosphothioketal. UDP-N-acetyl-alpha-D-glucosamine contacts are provided by residues 122–126 (RPIDQ), Asp-305, and Ile-327.

The protein belongs to the EPSP synthase family. MurA subfamily.

It localises to the cytoplasm. It catalyses the reaction phosphoenolpyruvate + UDP-N-acetyl-alpha-D-glucosamine = UDP-N-acetyl-3-O-(1-carboxyvinyl)-alpha-D-glucosamine + phosphate. The protein operates within cell wall biogenesis; peptidoglycan biosynthesis. Cell wall formation. Adds enolpyruvyl to UDP-N-acetylglucosamine. This Listeria monocytogenes serotype 4b (strain F2365) protein is UDP-N-acetylglucosamine 1-carboxyvinyltransferase 2.